Consider the following 450-residue polypeptide: Putative gustatory receptor 28a (450 aa).

The Cytoplasmic portion of the chain corresponds to M1 to K47. A helical membrane pass occupies residues F48–V68. Topologically, residues K69–S87 are extracellular. N82 carries N-linked (GlcNAc...) asparagine glycosylation. A helical membrane pass occupies residues D88–F108. Topologically, residues K109–R138 are cytoplasmic. The helical transmembrane segment at I139–C159 threads the bilayer. Residues V160–S171 lie on the Extracellular side of the membrane. A helical membrane pass occupies residues P172 to F192. The Cytoplasmic portion of the chain corresponds to K193 to Y292. Residues P293–L313 traverse the membrane as a helical segment. Residues E314–E329 are Extracellular-facing. The chain crosses the membrane as a helical span at residues F330–E350. Residues G351–T407 are Cytoplasmic-facing. Residues L408–I424 traverse the membrane as a helical segment. The Extracellular segment spans residues Q425–D450. N-linked (GlcNAc...) asparagine glycosylation occurs at N438.

This sequence belongs to the insect chemoreceptor superfamily. Gustatory receptor (GR) family. Gr2a subfamily. As to expression, in addition to expression in a large number of taste neurons, Gr28a is also expressed in a few nonchemosensory neurons, including the campaniform sensilla of the wing, leg stretch receptors, and multiple dendritic (MD) neurons in the abdomen. In larvea, is expressed in neurons of the terminal external chemosensory organ, the dorsal external chemosensory organ, as well as in the ventral and posterior pharyngeal sense organ.

The protein localises to the cell membrane. Probable gustatory receptor which mediates acceptance or avoidance behavior, depending on its substrates. Atypical expression also suggests nongustatory roles in the nervous system and tissues involved in proprioception, hygroreception, and other sensory modalities. It is also possible that it has chemosensory roles in the detection of internal ligands. The polypeptide is Putative gustatory receptor 28a (Gr28a) (Drosophila melanogaster (Fruit fly)).